The sequence spans 786 residues: Endonuclease MutS2 (786 aa).

An ATP-binding site is contributed by 332-339; it reads GPNTGGKT. Positions 711–786 constitute a Smr domain; sequence IDLRGMDSEE…GTGVTVVILK (76 aa).

Belongs to the DNA mismatch repair MutS family. MutS2 subfamily. Homodimer. Binds to stalled ribosomes, contacting rRNA.

Functionally, endonuclease that is involved in the suppression of homologous recombination and thus may have a key role in the control of bacterial genetic diversity. Acts as a ribosome collision sensor, splitting the ribosome into its 2 subunits. Detects stalled/collided 70S ribosomes which it binds and splits by an ATP-hydrolysis driven conformational change. Acts upstream of the ribosome quality control system (RQC), a ribosome-associated complex that mediates the extraction of incompletely synthesized nascent chains from stalled ribosomes and their subsequent degradation. Probably generates substrates for RQC. In Clostridium perfringens (strain SM101 / Type A), this protein is Endonuclease MutS2.